A 98-amino-acid polypeptide reads, in one-letter code: NADH-ubiquinone oxidoreductase chain 4L (98 aa).

Transmembrane regions (helical) follow at residues 2 to 22, 26 to 46, and 59 to 79; these read TSAFLNLTMAFTLSLLGTFMF, LMSTLLCLEGMMLSLFVMTST, and IPITILVFAACEAAVGLALLV.

It belongs to the complex I subunit 4L family. In terms of assembly, core subunit of respiratory chain NADH dehydrogenase (Complex I) which is composed of 45 different subunits.

Its subcellular location is the mitochondrion inner membrane. The enzyme catalyses a ubiquinone + NADH + 5 H(+)(in) = a ubiquinol + NAD(+) + 4 H(+)(out). Functionally, core subunit of the mitochondrial membrane respiratory chain NADH dehydrogenase (Complex I) which catalyzes electron transfer from NADH through the respiratory chain, using ubiquinone as an electron acceptor. Part of the enzyme membrane arm which is embedded in the lipid bilayer and involved in proton translocation. In Rattus norvegicus (Rat), this protein is NADH-ubiquinone oxidoreductase chain 4L.